The chain runs to 326 residues: Peroxidase 39 (326 aa).

An N-terminal signal peptide occupies residues 1–23 (MTRFGLALLMILVIQGLVTFSEA). 4 cysteine pairs are disulfide-bonded: Cys34–Cys114, Cys67–Cys72, Cys120–Cys322, and Cys199–Cys232. His65 functions as the Proton acceptor in the catalytic mechanism. Residues Asp66, Val69, Gly71, Asp73, and Ser75 each coordinate Ca(2+). N-linked (GlcNAc...) asparagine glycosylation is present at Asn79. Pro162 provides a ligand contact to substrate. A glycan (N-linked (GlcNAc...) asparagine) is linked at Asn167. His192 contributes to the heme b binding site. Thr193 contributes to the Ca(2+) binding site. N-linked (GlcNAc...) asparagine glycosylation is found at Asn208 and Asn238. Ca(2+) is bound by residues Asp245, Ser248, and Asp253.

Belongs to the peroxidase family. Classical plant (class III) peroxidase subfamily. Requires heme b as cofactor. Ca(2+) is required as a cofactor. Slightly expressed in roots.

Its subcellular location is the secreted. It catalyses the reaction 2 a phenolic donor + H2O2 = 2 a phenolic radical donor + 2 H2O. In terms of biological role, removal of H(2)O(2), oxidation of toxic reductants, biosynthesis and degradation of lignin, suberization, auxin catabolism, response to environmental stresses such as wounding, pathogen attack and oxidative stress. These functions might be dependent on each isozyme/isoform in each plant tissue. This chain is Peroxidase 39 (PER39), found in Arabidopsis thaliana (Mouse-ear cress).